The sequence spans 531 residues: Tyrosine/DOPA decarboxylase 2 (531 aa).

Lys-319 carries the post-translational modification N6-(pyridoxal phosphate)lysine.

The protein belongs to the group II decarboxylase family. Homodimer. It depends on pyridoxal 5'-phosphate as a cofactor. Predominantly expressed in the roots and stems, while a lower level expression is seen in the sepals and carpels of fully expanded flowers.

The catalysed reaction is L-tyrosine + H(+) = tyramine + CO2. It catalyses the reaction L-dopa + H(+) = dopamine + CO2. The enzyme catalyses 5-hydroxy-L-tryptophan + H(+) = serotonin + CO2. Functionally, marginally higher substrate specificity for L-DOPA over L-tyrosine. In Papaver somniferum (Opium poppy), this protein is Tyrosine/DOPA decarboxylase 2 (TYDC2).